The following is a 520-amino-acid chain: MASVAHISTAKAIFRAGGLPCRRLITPTLTGLPLKTHRMNSTTPTYHLIPKGGKHGEFRQESDTFGPIQVPAEKYWGAQTQRSLQNFRIGGEKERLPLPLVRAFGVLKRAAASVNREFGLDPKLADAIEQAAQEVIDGRLDDNFPLVVFQTGSGTQSNMNSNEVIANRAIEILGGTLGSKKPVHPNDHVNMSQSSNDTFPTVMHIASVLQIHTHLLPAMKHLHRALKGKEEEFKNIIKIGRTHMQDATPLSLGQEFSGYVTQVGYGIERINNALPRLCLLAQGGTAVGTGLNTFEGFDVKVAEKVSKLTNIEFKTAPNKFEALAAHDAIVEMSGALNVIACSLMKIANDIRQLGSGPRCGLGELILPANEPGSSIMPGKVNPTQCEALTMVCAQVMGNHATITVAGASGHCELNVFKPLLAKNILSSIRLLGDACESFTDHCVVGIEPNYEGIARHLRDSLMLVTALNPHIGYDNCAKIAKTALKNKSTLKHEFVTLGFGTPEQFDEWVRPELMISAKKV.

The transit peptide at 1 to 39 (MASVAHISTAKAIFRAGGLPCRRLITPTLTGLPLKTHRM) directs the protein to the mitochondrion. Residues 153–155 (SGT), 184–187 (HPND), 194–196 (SSN), and Thr-242 contribute to the substrate site. The Proton donor/acceptor role is filled by His-243. Ser-373 is a catalytic residue. Substrate is bound by residues Ser-374 and 379-381 (KVN).

The protein belongs to the class-II fumarase/aspartase family. Fumarase subfamily. Homotetramer.

Its subcellular location is the mitochondrion matrix. The protein localises to the cytoplasm. It localises to the nucleus. The catalysed reaction is (S)-malate = fumarate + H2O. Its pathway is carbohydrate metabolism; tricarboxylic acid cycle; (S)-malate from fumarate: step 1/1. In terms of biological role, catalyzes the reversible stereospecific interconversion of fumarate to L-malate. In mitochondrion, catalyzes the hydration of fumarate to L-malate in the tricarboxylic acid (TCA) cycle to facilitate a transition step in the production of energy in the form of NADH. In cytoplasm and nucleus, involved in DNA repair in response to DNA damage: following DNA double-strand breaks (DSBs), translocates from the cytosol to the nucleus and promotes DNA repair by catalyzing the dehydration of L-malate to fumarate. This is Fumarate hydratase, mitochondrial (fum1) from Schizosaccharomyces pombe (strain 972 / ATCC 24843) (Fission yeast).